The sequence spans 225 residues: 3-dehydroquinate dehydratase (225 aa).

3-dehydroquinate contacts are provided by residues S6, 30–32 (EWR), and R62. The active-site Proton donor/acceptor is the H118. The active-site Schiff-base intermediate with substrate is the K143. 3-dehydroquinate is bound by residues R186, T205, and Q209.

This sequence belongs to the type-I 3-dehydroquinase family. In terms of assembly, homodimer.

The catalysed reaction is 3-dehydroquinate = 3-dehydroshikimate + H2O. It functions in the pathway metabolic intermediate biosynthesis; chorismate biosynthesis; chorismate from D-erythrose 4-phosphate and phosphoenolpyruvate: step 3/7. Involved in the third step of the chorismate pathway, which leads to the biosynthesis of aromatic amino acids. Catalyzes the cis-dehydration of 3-dehydroquinate (DHQ) and introduces the first double bond of the aromatic ring to yield 3-dehydroshikimate. The sequence is that of 3-dehydroquinate dehydratase from Streptococcus gordonii (strain Challis / ATCC 35105 / BCRC 15272 / CH1 / DL1 / V288).